A 566-amino-acid polypeptide reads, in one-letter code: DNA ligase B (566 aa).

Lys125 functions as the N6-AMP-lysine intermediate in the catalytic mechanism.

It belongs to the NAD-dependent DNA ligase family. LigB subfamily.

The catalysed reaction is NAD(+) + (deoxyribonucleotide)n-3'-hydroxyl + 5'-phospho-(deoxyribonucleotide)m = (deoxyribonucleotide)n+m + AMP + beta-nicotinamide D-nucleotide.. In terms of biological role, catalyzes the formation of phosphodiester linkages between 5'-phosphoryl and 3'-hydroxyl groups in double-stranded DNA using NAD as a coenzyme and as the energy source for the reaction. The sequence is that of DNA ligase B from Pseudomonas putida (strain ATCC 47054 / DSM 6125 / CFBP 8728 / NCIMB 11950 / KT2440).